We begin with the raw amino-acid sequence, 381 residues long: Chaperone protein DnaJ (381 aa).

One can recognise a J domain in the interval 5-69; that stretch reads DYYEVLGVSK…EKRARYDRFG (65 aa). Residues 136-218 form a CR-type zinc finger; that stretch reads GKETEIEVPH…CGGTGHVKKR (83 aa). Zn(2+) is bound by residues Cys149, Cys152, Cys166, Cys169, Cys192, Cys195, Cys206, and Cys209. CXXCXGXG motif repeat units follow at residues 149-156, 166-173, 192-199, and 206-213; these read CDTCHGSG, CPHCHGSG, CPVCGGTG, and CPTCGGTG. Positions 154–174 are disordered; the sequence is GSGAKPGTSPQSCPHCHGSGQ.

It belongs to the DnaJ family. Homodimer. The cofactor is Zn(2+).

It is found in the cytoplasm. Participates actively in the response to hyperosmotic and heat shock by preventing the aggregation of stress-denatured proteins and by disaggregating proteins, also in an autonomous, DnaK-independent fashion. Unfolded proteins bind initially to DnaJ; upon interaction with the DnaJ-bound protein, DnaK hydrolyzes its bound ATP, resulting in the formation of a stable complex. GrpE releases ADP from DnaK; ATP binding to DnaK triggers the release of the substrate protein, thus completing the reaction cycle. Several rounds of ATP-dependent interactions between DnaJ, DnaK and GrpE are required for fully efficient folding. Also involved, together with DnaK and GrpE, in the DNA replication of plasmids through activation of initiation proteins. This Geobacillus thermodenitrificans (strain NG80-2) protein is Chaperone protein DnaJ.